The sequence spans 302 residues: Putative thiol protease R355 (302 aa).

Residues H182 and D199 contribute to the active site. The active-site Nucleophile is the C244.

This sequence belongs to the peptidase C48 family.

It localises to the virion. The sequence is that of Putative thiol protease R355 from Acanthamoeba polyphaga mimivirus (APMV).